Consider the following 41-residue polypeptide: Cytochrome b559 subunit beta (41 aa).

A helical transmembrane segment spans residues 16-32 (WLAVHALAIPTVFFLGS). His-20 is a heme binding site.

Belongs to the PsbE/PsbF family. As to quaternary structure, heterodimer of an alpha subunit and a beta subunit. PSII is composed of 1 copy each of membrane proteins PsbA, PsbB, PsbC, PsbD, PsbE, PsbF, PsbH, PsbI, PsbJ, PsbK, PsbL, PsbM, PsbT, PsbY, PsbZ, Psb30/Ycf12, at least 3 peripheral proteins of the oxygen-evolving complex and a large number of cofactors. It forms dimeric complexes. The cofactor is heme b.

It localises to the plastid. The protein localises to the chloroplast thylakoid membrane. Functionally, this b-type cytochrome is tightly associated with the reaction center of photosystem II (PSII). PSII is a light-driven water:plastoquinone oxidoreductase that uses light energy to abstract electrons from H(2)O, generating O(2) and a proton gradient subsequently used for ATP formation. It consists of a core antenna complex that captures photons, and an electron transfer chain that converts photonic excitation into a charge separation. This is Cytochrome b559 subunit beta from Euglena gracilis.